We begin with the raw amino-acid sequence, 601 residues long: DnaJ-like protein MG200 (601 aa).

Residues 5-77 form the J domain; it reads KRDYYEVLGI…DKYGFDGVDG (73 aa). Disordered regions lie at residues 143-163 and 205-272; these read VQQN…VPGE and VDSE…EPIP. Positions 151–160 are enriched in basic and acidic residues; it reads KDPDELRSKV. Residues 263–272 show a composition bias toward pro residues; it reads EPTPIPEPIP.

The polypeptide is DnaJ-like protein MG200 (Mycoplasma genitalium (strain ATCC 33530 / DSM 19775 / NCTC 10195 / G37) (Mycoplasmoides genitalium)).